Here is a 392-residue protein sequence, read N- to C-terminus: Anhydro-N-acetylmuramic acid kinase (392 aa).

G22–D29 serves as a coordination point for ATP.

The protein belongs to the anhydro-N-acetylmuramic acid kinase family.

It catalyses the reaction 1,6-anhydro-N-acetyl-beta-muramate + ATP + H2O = N-acetyl-D-muramate 6-phosphate + ADP + H(+). It functions in the pathway amino-sugar metabolism; 1,6-anhydro-N-acetylmuramate degradation. The protein operates within cell wall biogenesis; peptidoglycan recycling. In terms of biological role, catalyzes the specific phosphorylation of 1,6-anhydro-N-acetylmuramic acid (anhMurNAc) with the simultaneous cleavage of the 1,6-anhydro ring, generating MurNAc-6-P. Is required for the utilization of anhMurNAc either imported from the medium or derived from its own cell wall murein, and thus plays a role in cell wall recycling. The protein is Anhydro-N-acetylmuramic acid kinase of Burkholderia mallei (strain NCTC 10229).